We begin with the raw amino-acid sequence, 225 residues long: Phosphoserine phosphatase (225 aa).

Met-1 is modified (N-acetylmethionine). Residue Asp-20 is the Nucleophile of the active site. Mg(2+) contacts are provided by Asp-20 and Asp-22. Residue 20 to 22 (DVD) coordinates L-serine. The Proton donor role is filled by Asp-22. Met-52 provides a ligand contact to O-phospho-L-serine. Gly-53 serves as a coordination point for phosphate. L-serine contacts are provided by residues 109 to 111 (SGG) and Lys-158. O-phospho-L-serine-binding positions include 109-111 (SGG) and Lys-158. A Mg(2+)-binding site is contributed by Asp-179. Thr-182 contributes to the O-phospho-L-serine binding site. Residue Thr-182 coordinates phosphate.

The protein belongs to the HAD-like hydrolase superfamily. SerB family. As to quaternary structure, homodimer. Mg(2+) serves as cofactor.

Its subcellular location is the cytoplasm. The protein localises to the cytosol. The catalysed reaction is O-phospho-L-serine + H2O = L-serine + phosphate. It catalyses the reaction O-phospho-D-serine + H2O = D-serine + phosphate. It functions in the pathway amino-acid biosynthesis; L-serine biosynthesis; L-serine from 3-phospho-D-glycerate: step 3/3. Functionally, catalyzes the last irreversible step in the biosynthesis of L-serine from carbohydrates, the dephosphorylation of O-phospho-L-serine to L-serine. L-serine can then be used in protein synthesis, to produce other amino acids, in nucleotide metabolism or in glutathione synthesis, or can be racemized to D-serine, a neuromodulator. May also act on O-phospho-D-serine. This chain is Phosphoserine phosphatase, found in Bos taurus (Bovine).